We begin with the raw amino-acid sequence, 375 residues long: Actin-related protein T1 (375 aa).

It belongs to the actin family.

The protein localises to the cytoplasm. It localises to the cytoskeleton. The protein resides in the nucleus. It is found in the cytoplasmic vesicle. Its subcellular location is the secretory vesicle. The protein localises to the acrosome. Functionally, negatively regulates the Hedgehog (SHH) signaling. Binds to the promoter of the SHH signaling mediator, GLI1, and inhibits its expression. This is Actin-related protein T1 (ACTRT1) from Macaca fascicularis (Crab-eating macaque).